The chain runs to 668 residues: tRNA 5-methylaminomethyl-2-thiouridine biosynthesis bifunctional protein MnmC (668 aa).

The interval 1–245 (MKHYSIQPAN…KREMLCGVME (245 aa)) is tRNA (mnm(5)s(2)U34)-methyltransferase. Residues 270 to 668 (IGGGIASALL…LLKGKAVKAG (399 aa)) are FAD-dependent cmnm(5)s(2)U34 oxidoreductase.

The protein in the N-terminal section; belongs to the methyltransferase superfamily. tRNA (mnm(5)s(2)U34)-methyltransferase family. In the C-terminal section; belongs to the DAO family. FAD is required as a cofactor.

The protein resides in the cytoplasm. It catalyses the reaction 5-aminomethyl-2-thiouridine(34) in tRNA + S-adenosyl-L-methionine = 5-methylaminomethyl-2-thiouridine(34) in tRNA + S-adenosyl-L-homocysteine + H(+). In terms of biological role, catalyzes the last two steps in the biosynthesis of 5-methylaminomethyl-2-thiouridine (mnm(5)s(2)U) at the wobble position (U34) in tRNA. Catalyzes the FAD-dependent demodification of cmnm(5)s(2)U34 to nm(5)s(2)U34, followed by the transfer of a methyl group from S-adenosyl-L-methionine to nm(5)s(2)U34, to form mnm(5)s(2)U34. The sequence is that of tRNA 5-methylaminomethyl-2-thiouridine biosynthesis bifunctional protein MnmC from Escherichia coli O9:H4 (strain HS).